The sequence spans 828 residues: Kinesin-associated protein 3 (828 aa).

3 ARM repeats span residues 332 to 372 (YVEN…NLSF), 373 to 411 (DTDLRGKMIKLGMLPKFVELLANDNHRLVVLCVLYHVSQ), and 577 to 611 (DDSCAAMLAKSGIIQSLIELLNAKQEDDEIVCQIV).

Heterotrimer of a 115 kDa subunit (KAP115) and two kinesin-like subunits of 95 kDa (KRP95) and 85 kDa (KRP85).

In terms of biological role, binds to the tail domain of the KRP85/KRP95 heterodimer to form a heterotrimeric kinesin-II complex and may regulate the spindle vesicle targeting of this complex. The polypeptide is Kinesin-associated protein 3 (KAP115) (Strongylocentrotus purpuratus (Purple sea urchin)).